The sequence spans 137 residues: Large ribosomal subunit protein uL16 (137 aa).

This sequence belongs to the universal ribosomal protein uL16 family. As to quaternary structure, part of the 50S ribosomal subunit.

Binds 23S rRNA and is also seen to make contacts with the A and possibly P site tRNAs. The sequence is that of Large ribosomal subunit protein uL16 from Ectopseudomonas mendocina (strain ymp) (Pseudomonas mendocina).